An 810-amino-acid polypeptide reads, in one-letter code: Zinc finger transcription factor YRR1 (810 aa).

The interval 1–47 (MKRRSDALLGSFQATNVTPPSDNSNSTAGGANGSNSGTPTSTSGKKR) is disordered. The segment covering 12 to 22 (FQATNVTPPSD) has biased composition (polar residues). The segment covering 23-43 (NSNSTAGGANGSNSGTPTSTS) has biased composition (low complexity). A DNA-binding region (zn(2)-C6 fungal-type) is located at residues 54 to 82 (CGFCRRRKLRCDQQKPMCSTCISRNLTTC). Residues 722–742 (ELDPQSDNPSSEAKIVSDRQR) form a disordered region.

Its subcellular location is the cytoplasm. The protein localises to the nucleus. In terms of biological role, transcription factor involved in the regulation of multidrug resistance genes. Acts in concert with YRR1. This chain is Zinc finger transcription factor YRR1 (YRR1), found in Saccharomyces cerevisiae (strain ATCC 204508 / S288c) (Baker's yeast).